Here is a 203-residue protein sequence, read N- to C-terminus: MKTPASLESLITALRVLPGVGPKTAQRMAYHLMQRDPGGADRLARAIDHARSHLKHCARCNTFSETELCVLCADDQRRQDVLCVVEMPADALMIEQTHSYDGLYFVLMGKVSPLDGLTARDIPLEQLARRALDGTVNEVILATNFTAEGEATAHVLATLFKDRGLSVSRIARGLPVGGELEHVDAGTLAQALYERRRLSTGDA.

Residues 57 to 72 (CARCNTFSETELCVLC) form a C4-type zinc finger. The region spanning 80 to 175 (DVLCVVEMPA…SVSRIARGLP (96 aa)) is the Toprim domain.

This sequence belongs to the RecR family.

In terms of biological role, may play a role in DNA repair. It seems to be involved in an RecBC-independent recombinational process of DNA repair. It may act with RecF and RecO. The protein is Recombination protein RecR of Laribacter hongkongensis (strain HLHK9).